We begin with the raw amino-acid sequence, 211 residues long: Protein GrpE (211 aa).

Positions 1 to 43 (MTDETTKNGPDATAADAAADAAANVEIDNSVQEEAKQPDPLEL) are disordered. Over residues 11–23 (DATAADAAADAAA) the composition is skewed to low complexity. Over residues 33 to 43 (EEAKQPDPLEL) the composition is skewed to basic and acidic residues.

The protein belongs to the GrpE family. As to quaternary structure, homodimer.

The protein resides in the cytoplasm. In terms of biological role, participates actively in the response to hyperosmotic and heat shock by preventing the aggregation of stress-denatured proteins, in association with DnaK and GrpE. It is the nucleotide exchange factor for DnaK and may function as a thermosensor. Unfolded proteins bind initially to DnaJ; upon interaction with the DnaJ-bound protein, DnaK hydrolyzes its bound ATP, resulting in the formation of a stable complex. GrpE releases ADP from DnaK; ATP binding to DnaK triggers the release of the substrate protein, thus completing the reaction cycle. Several rounds of ATP-dependent interactions between DnaJ, DnaK and GrpE are required for fully efficient folding. This Rhizobium etli (strain ATCC 51251 / DSM 11541 / JCM 21823 / NBRC 15573 / CFN 42) protein is Protein GrpE.